Consider the following 476-residue polypeptide: Probable rhodanese domain-containing dual specificity protein phosphatase (476 aa).

In terms of domain architecture, Rhodanese spans 32–190; sequence IGSSKIIIDL…FQKDYSFMCN (159 aa). One can recognise a Tyrosine-protein phosphatase domain in the interval 208 to 350; it reads YPSEIIKDFL…LKDYQQHLTL (143 aa). The active-site Phosphocysteine intermediate is the Cys-294. Residues 425-436 show a composition bias toward low complexity; the sequence is KTTTSSTTINNK. Residues 425 to 476 form a disordered region; it reads KTTTSSTTINNKGQQQDKAQEEKDSIFSYADKQEKMTHPTLHSPIELPQSSL. Positions 442-461 are enriched in basic and acidic residues; the sequence is KAQEEKDSIFSYADKQEKMT.

The protein belongs to the protein-tyrosine phosphatase family. Non-receptor class dual specificity subfamily.

It carries out the reaction O-phospho-L-tyrosyl-[protein] + H2O = L-tyrosyl-[protein] + phosphate. The enzyme catalyses O-phospho-L-seryl-[protein] + H2O = L-seryl-[protein] + phosphate. It catalyses the reaction O-phospho-L-threonyl-[protein] + H2O = L-threonyl-[protein] + phosphate. Has a dual specificity toward Ser/Thr and Tyr-containing proteins. In Dictyostelium discoideum (Social amoeba), this protein is Probable rhodanese domain-containing dual specificity protein phosphatase.